The sequence spans 295 residues: Nucleotide-binding protein LSEI_0959 (295 aa).

ATP is bound at residue 12-19 (GMSGAGKT). 62-65 (DLRS) contributes to the GTP binding site.

It belongs to the RapZ-like family.

Displays ATPase and GTPase activities. This is Nucleotide-binding protein LSEI_0959 from Lacticaseibacillus paracasei (strain ATCC 334 / BCRC 17002 / CCUG 31169 / CIP 107868 / KCTC 3260 / NRRL B-441) (Lactobacillus paracasei).